The sequence spans 252 residues: Thiamine thiazole synthase (252 aa).

Residues Ser-35, 54 to 55 (EK), Gly-62, Val-126, and 152 to 154 (HVD) each bind NAD(+). Residues Asp-154 and His-169 each coordinate Fe cation. Position 217 (Met-217) interacts with NAD(+). Arg-227 is a glycine binding site.

This sequence belongs to the THI4 family. Homooctamer; tetramer of dimers. Fe(2+) is required as a cofactor.

The enzyme catalyses hydrogen sulfide + glycine + NAD(+) = ADP-5-ethyl-4-methylthiazole-2-carboxylate + nicotinamide + 3 H2O + H(+). It participates in cofactor biosynthesis; thiamine diphosphate biosynthesis. Functionally, involved in the biosynthesis of the thiazole moiety of thiamine. Catalyzes the conversion of NAD and glycine to adenosine diphosphate 5-(2-hydroxyethyl)-4-methylthiazole-2-carboxylate (ADT), an adenylated thiazole intermediate, using free sulfide as a source of sulfur. This Pyrococcus horikoshii (strain ATCC 700860 / DSM 12428 / JCM 9974 / NBRC 100139 / OT-3) protein is Thiamine thiazole synthase.